The primary structure comprises 160 residues: Leucokinin (160 aa).

The first 19 residues, 1 to 19, serve as a signal peptide directing secretion; the sequence is MAKIVLCMVLLAFGRQVYG. A propeptide spanning residues 20–130 is cleaved from the precursor; the sequence is ASLVPAPISE…RIKSQLQRDE (111 aa). Position 147 is a glycine amide (glycine 147). The propeptide occupies 151–160; that stretch reads SPEPPILPDY.

Its subcellular location is the secreted. Its function is as follows. Acts through intracellular calcium in Malpighian tubule stellate cells to raise chloride conductance. The chain is Leucokinin (Lk) from Drosophila melanogaster (Fruit fly).